The sequence spans 460 residues: Bifunctional protein GlmU (460 aa).

The pyrophosphorylase stretch occupies residues 1–228; the sequence is MKNYALVLAA…NSLAMGVNDL (228 aa). Residues 8 to 11, Lys-22, Gln-72, and 77 to 78 each bind UDP-N-acetyl-alpha-D-glucosamine; these read LAAG and GT. Residue Asp-102 participates in Mg(2+) binding. The UDP-N-acetyl-alpha-D-glucosamine site is built by Gly-139, Glu-154, Asn-169, and Asn-226. Asn-226 contacts Mg(2+). The linker stretch occupies residues 229–249; sequence YAISKAEKYLREYINKDHMLN. The interval 250 to 460 is N-acetyltransferase; that stretch reads GVSMINPETI…LISPKPKKEE (211 aa). Arg-331 and Lys-349 together coordinate UDP-N-acetyl-alpha-D-glucosamine. Residue His-361 is the Proton acceptor of the active site. Tyr-364 and Asn-375 together coordinate UDP-N-acetyl-alpha-D-glucosamine. Residues 384-385, Ala-421, and Arg-438 each bind acetyl-CoA; that span reads NY.

In the N-terminal section; belongs to the N-acetylglucosamine-1-phosphate uridyltransferase family. The protein in the C-terminal section; belongs to the transferase hexapeptide repeat family. Homotrimer. Mg(2+) serves as cofactor.

The protein localises to the cytoplasm. The catalysed reaction is alpha-D-glucosamine 1-phosphate + acetyl-CoA = N-acetyl-alpha-D-glucosamine 1-phosphate + CoA + H(+). It carries out the reaction N-acetyl-alpha-D-glucosamine 1-phosphate + UTP + H(+) = UDP-N-acetyl-alpha-D-glucosamine + diphosphate. The protein operates within nucleotide-sugar biosynthesis; UDP-N-acetyl-alpha-D-glucosamine biosynthesis; N-acetyl-alpha-D-glucosamine 1-phosphate from alpha-D-glucosamine 6-phosphate (route II): step 2/2. It functions in the pathway nucleotide-sugar biosynthesis; UDP-N-acetyl-alpha-D-glucosamine biosynthesis; UDP-N-acetyl-alpha-D-glucosamine from N-acetyl-alpha-D-glucosamine 1-phosphate: step 1/1. Its pathway is bacterial outer membrane biogenesis; LPS lipid A biosynthesis. In terms of biological role, catalyzes the last two sequential reactions in the de novo biosynthetic pathway for UDP-N-acetylglucosamine (UDP-GlcNAc). The C-terminal domain catalyzes the transfer of acetyl group from acetyl coenzyme A to glucosamine-1-phosphate (GlcN-1-P) to produce N-acetylglucosamine-1-phosphate (GlcNAc-1-P), which is converted into UDP-GlcNAc by the transfer of uridine 5-monophosphate (from uridine 5-triphosphate), a reaction catalyzed by the N-terminal domain. This Acholeplasma laidlawii (strain PG-8A) protein is Bifunctional protein GlmU.